The chain runs to 536 residues: Protein ST7 homolog (536 aa).

A run of 2 helical transmembrane segments spans residues C3–L23 and F49–W69. Residues L191–N218 are a coiled coil. The helical transmembrane segment at T465–A485 threads the bilayer.

It belongs to the ST7 family.

It is found in the membrane. This is Protein ST7 homolog from Caenorhabditis elegans.